The sequence spans 269 residues: 4-hydroxy-tetrahydrodipicolinate reductase (269 aa).

Residues 10-15 (GANGRM), glutamate 36, 99-101 (GTT), and 123-126 (AANF) each bind NAD(+). The active-site Proton donor/acceptor is the histidine 156. Histidine 157 contacts (S)-2,3,4,5-tetrahydrodipicolinate. The active-site Proton donor is lysine 160. Residue 166–167 (GT) participates in (S)-2,3,4,5-tetrahydrodipicolinate binding.

The protein belongs to the DapB family.

It localises to the cytoplasm. The enzyme catalyses (S)-2,3,4,5-tetrahydrodipicolinate + NAD(+) + H2O = (2S,4S)-4-hydroxy-2,3,4,5-tetrahydrodipicolinate + NADH + H(+). It carries out the reaction (S)-2,3,4,5-tetrahydrodipicolinate + NADP(+) + H2O = (2S,4S)-4-hydroxy-2,3,4,5-tetrahydrodipicolinate + NADPH + H(+). Its pathway is amino-acid biosynthesis; L-lysine biosynthesis via DAP pathway; (S)-tetrahydrodipicolinate from L-aspartate: step 4/4. Its function is as follows. Catalyzes the conversion of 4-hydroxy-tetrahydrodipicolinate (HTPA) to tetrahydrodipicolinate. The protein is 4-hydroxy-tetrahydrodipicolinate reductase of Neisseria gonorrhoeae (strain ATCC 700825 / FA 1090).